Reading from the N-terminus, the 259-residue chain is Ribonuclease PH (259 aa).

Phosphate is bound by residues arginine 88 and 126–128; that span reads GTR.

This sequence belongs to the RNase PH family. As to quaternary structure, homohexameric ring arranged as a trimer of dimers.

The catalysed reaction is tRNA(n+1) + phosphate = tRNA(n) + a ribonucleoside 5'-diphosphate. Functionally, phosphorolytic 3'-5' exoribonuclease that plays an important role in tRNA 3'-end maturation. Removes nucleotide residues following the 3'-CCA terminus of tRNAs; can also add nucleotides to the ends of RNA molecules by using nucleoside diphosphates as substrates, but this may not be physiologically important. Probably plays a role in initiation of 16S rRNA degradation (leading to ribosome degradation) during starvation. This is Ribonuclease PH from Mycolicibacterium smegmatis (strain ATCC 700084 / mc(2)155) (Mycobacterium smegmatis).